The following is a 127-amino-acid chain: Membrane-bound lysozyme inhibitor of C-type lysozyme (127 aa).

A signal peptide spans 1–18 (MKKALWLLLAAVPVVLVA). A lipid anchor (N-palmitoyl cysteine) is attached at C19. C19 carries S-diacylglycerol cysteine lipidation. A disulfide bridge links C51 with C124.

It belongs to the MliC family. Type 2 subfamily. Homodimer.

The protein resides in the cell outer membrane. Its function is as follows. Specifically inhibits C-type lysozymes. The chain is Membrane-bound lysozyme inhibitor of C-type lysozyme from Pseudomonas aeruginosa (strain ATCC 15692 / DSM 22644 / CIP 104116 / JCM 14847 / LMG 12228 / 1C / PRS 101 / PAO1).